The following is a 388-amino-acid chain: Formate-dependent phosphoribosylglycinamide formyltransferase (388 aa).

N(1)-(5-phospho-beta-D-ribosyl)glycinamide contacts are provided by residues 11–12 and glutamate 71; that span reads EL. ATP is bound by residues arginine 103, lysine 144, 149 to 154, 184 to 187, and glutamate 192; these read SSGKGQ and EEFI. The region spanning 108–300 is the ATP-grasp domain; it reads DLAAKELGLK…EFELHLRAVL (193 aa). Mg(2+) contacts are provided by glutamate 257 and glutamate 270. N(1)-(5-phospho-beta-D-ribosyl)glycinamide is bound by residues aspartate 277, lysine 349, and 356-357; that span reads RR.

It belongs to the PurK/PurT family. Homodimer.

The catalysed reaction is N(1)-(5-phospho-beta-D-ribosyl)glycinamide + formate + ATP = N(2)-formyl-N(1)-(5-phospho-beta-D-ribosyl)glycinamide + ADP + phosphate + H(+). It participates in purine metabolism; IMP biosynthesis via de novo pathway; N(2)-formyl-N(1)-(5-phospho-D-ribosyl)glycinamide from N(1)-(5-phospho-D-ribosyl)glycinamide (formate route): step 1/1. Functionally, involved in the de novo purine biosynthesis. Catalyzes the transfer of formate to 5-phospho-ribosyl-glycinamide (GAR), producing 5-phospho-ribosyl-N-formylglycinamide (FGAR). Formate is provided by PurU via hydrolysis of 10-formyl-tetrahydrofolate. The chain is Formate-dependent phosphoribosylglycinamide formyltransferase from Bacteroides fragilis (strain ATCC 25285 / DSM 2151 / CCUG 4856 / JCM 11019 / LMG 10263 / NCTC 9343 / Onslow / VPI 2553 / EN-2).